We begin with the raw amino-acid sequence, 325 residues long: Bifunctional nuclease 2 (325 aa).

In terms of domain architecture, BFN spans 119–254; it reads CVHNNSQGRN…SLAYSDGIRS (136 aa). A UVR domain is found at 285–320; sequence EAQEFGLIRNMLIAAVEERYKDAATWRDKLMLLRSK.

It belongs to the bifunctional nuclease family.

It localises to the nucleus. In terms of biological role, bifunctional nuclease with both RNase and DNase activities. Involved in basal defense response. Participates in abscisic acid-derived callose deposition following infection by a necrotrophic pathogen. This is Bifunctional nuclease 2 (BBD2) from Oryza sativa subsp. japonica (Rice).